Consider the following 134-residue polypeptide: Small ribosomal subunit protein bS16 (134 aa).

A disordered region spans residues 79-134 (AGIAKRPSRNNPTKGEPGKKAQERLALAKQAEEEASAKAAEAAAAAAAPAEEAASE). Positions 115-134 (AKAAEAAAAAAAPAEEAASE) are enriched in low complexity.

This sequence belongs to the bacterial ribosomal protein bS16 family.

The chain is Small ribosomal subunit protein bS16 from Brucella abortus (strain S19).